Here is a 581-residue protein sequence, read N- to C-terminus: UvrABC system protein C (581 aa).

The GIY-YIG domain maps to 15 to 94 (REPGVYLFEQ…IKRHRPPYNV (80 aa)). Residues 202-237 (GVLADPLRREMEAAAQNQEFERAANLRDKLGAVEAL) form the UVR domain.

The protein belongs to the UvrC family. In terms of assembly, interacts with UvrB in an incision complex.

Its subcellular location is the cytoplasm. Its function is as follows. The UvrABC repair system catalyzes the recognition and processing of DNA lesions. UvrC both incises the 5' and 3' sides of the lesion. The N-terminal half is responsible for the 3' incision and the C-terminal half is responsible for the 5' incision. The sequence is that of UvrABC system protein C from Haloarcula marismortui (strain ATCC 43049 / DSM 3752 / JCM 8966 / VKM B-1809) (Halobacterium marismortui).